The primary structure comprises 132 residues: Fluoride-specific ion channel FluC 3 (132 aa).

A run of 4 helical transmembrane segments spans residues Ile-4–Trp-24, Phe-32–Tyr-52, Ile-66–Ser-86, and Leu-95–Leu-115. Na(+) is bound by residues Gly-74 and Thr-77.

This sequence belongs to the fluoride channel Fluc/FEX (TC 1.A.43) family.

Its subcellular location is the cell membrane. The enzyme catalyses fluoride(in) = fluoride(out). With respect to regulation, na(+) is not transported, but it plays an essential structural role and its presence is essential for fluoride channel function. Functionally, fluoride-specific ion channel. Important for reducing fluoride concentration in the cell, thus reducing its toxicity. This is Fluoride-specific ion channel FluC 3 from Methanosarcina barkeri (strain Fusaro / DSM 804).